We begin with the raw amino-acid sequence, 438 residues long: V-type ATP synthase beta chain (438 aa).

This sequence belongs to the ATPase alpha/beta chains family.

In terms of biological role, produces ATP from ADP in the presence of a proton gradient across the membrane. The V-type beta chain is a regulatory subunit. The chain is V-type ATP synthase beta chain from Chlamydia felis (strain Fe/C-56) (Chlamydophila felis).